The primary structure comprises 500 residues: ADP,ATP carrier protein 5 (500 aa).

Transmembrane regions (helical) follow at residues 26–46, 62–82, 94–114, 149–169, 184–204, 224–244, 287–307, 328–348, 357–377, 381–401, and 469–489; these read LGKF…QNIL, IAGF…VIIY, IFYY…FVIY, YIVY…LLFW, FYTL…FLMM, ITLV…CCLL, LWLL…VEAV, LYIL…NNVM, AVIS…LIVF, ILSL…VSIG, and SISP…IYAV.

This sequence belongs to the ADP/ATP translocase tlc family.

It is found in the cell membrane. Provides the rickettsial cell with host ATP in exchange for rickettsial ADP. This is an obligate exchange system. This energy acquiring activity is an important component of rickettsial parasitism. This Rickettsia typhi (strain ATCC VR-144 / Wilmington) protein is ADP,ATP carrier protein 5 (tlcE).